We begin with the raw amino-acid sequence, 146 residues long: D-aminoacyl-tRNA deacylase (146 aa).

Residues 137-138 (GP) carry the Gly-cisPro motif, important for rejection of L-amino acids motif.

It belongs to the DTD family. As to quaternary structure, homodimer.

The protein localises to the cytoplasm. The catalysed reaction is glycyl-tRNA(Ala) + H2O = tRNA(Ala) + glycine + H(+). It catalyses the reaction a D-aminoacyl-tRNA + H2O = a tRNA + a D-alpha-amino acid + H(+). Functionally, an aminoacyl-tRNA editing enzyme that deacylates mischarged D-aminoacyl-tRNAs. Also deacylates mischarged glycyl-tRNA(Ala), protecting cells against glycine mischarging by AlaRS. Acts via tRNA-based rather than protein-based catalysis; rejects L-amino acids rather than detecting D-amino acids in the active site. By recycling D-aminoacyl-tRNA to D-amino acids and free tRNA molecules, this enzyme counteracts the toxicity associated with the formation of D-aminoacyl-tRNA entities in vivo and helps enforce protein L-homochirality. The chain is D-aminoacyl-tRNA deacylase from Bacillus mycoides (strain KBAB4) (Bacillus weihenstephanensis).